The following is a 180-amino-acid chain: Stathmin-3 (180 aa).

Positions 38–180 (GDMEVKQLDK…NKEQREEISG (143 aa)) constitute an SLD domain. Positions 60–74 (SPSDLSPESPILSSP) are enriched in low complexity. The segment at 60–82 (SPSDLSPESPILSSPPKKKDLSL) is disordered. The stretch at 75–179 (PKKKDLSLEE…RNKEQREEIS (105 aa)) forms a coiled coil.

This sequence belongs to the stathmin family.

This chain is Stathmin-3 (STMN3), found in Gallus gallus (Chicken).